A 251-amino-acid chain; its full sequence is Probable inactive cytidine deaminase 4 (251 aa).

Residue 61-63 coordinates substrate; that stretch reads NVE. Catalysis depends on glutamate 76, which acts as the Proton donor. Residues 136 to 251 enclose the CMP/dCMP-type deaminase domain; the sequence is EHCSHLKCRA…VFRCHKTAEN (116 aa).

This sequence belongs to the cytidine and deoxycytidylate deaminase family. As to quaternary structure, homodimer.

This is Probable inactive cytidine deaminase 4 (CDA4) from Arabidopsis thaliana (Mouse-ear cress).